Here is a 372-residue protein sequence, read N- to C-terminus: Transaldolase 2 (372 aa).

The active-site Schiff-base intermediate with substrate is K140.

The protein belongs to the transaldolase family. Type 2 subfamily.

It is found in the cytoplasm. The enzyme catalyses D-sedoheptulose 7-phosphate + D-glyceraldehyde 3-phosphate = D-erythrose 4-phosphate + beta-D-fructose 6-phosphate. It functions in the pathway carbohydrate degradation; pentose phosphate pathway; D-glyceraldehyde 3-phosphate and beta-D-fructose 6-phosphate from D-ribose 5-phosphate and D-xylulose 5-phosphate (non-oxidative stage): step 2/3. In terms of biological role, transaldolase is important for the balance of metabolites in the pentose-phosphate pathway. This Streptomyces coelicolor (strain ATCC BAA-471 / A3(2) / M145) protein is Transaldolase 2.